Consider the following 150-residue polypeptide: 3-dehydroquinate dehydratase (150 aa).

The active-site Proton acceptor is Tyr26. Residues Asn77, His83, and Asp90 each coordinate substrate. His103 (proton donor) is an active-site residue. Residues 104–105 (LS) and Arg114 contribute to the substrate site.

Belongs to the type-II 3-dehydroquinase family. In terms of assembly, homododecamer.

It carries out the reaction 3-dehydroquinate = 3-dehydroshikimate + H2O. Its pathway is metabolic intermediate biosynthesis; chorismate biosynthesis; chorismate from D-erythrose 4-phosphate and phosphoenolpyruvate: step 3/7. Functionally, catalyzes a trans-dehydration via an enolate intermediate. The sequence is that of 3-dehydroquinate dehydratase from Mannheimia succiniciproducens (strain KCTC 0769BP / MBEL55E).